The primary structure comprises 106 residues: uncharacterized protein (106 aa).

This is an uncharacterized protein from Mycoplasma pneumoniae (strain ATCC 29342 / M129 / Subtype 1) (Mycoplasmoides pneumoniae).